A 168-amino-acid polypeptide reads, in one-letter code: 2-C-methyl-D-erythritol 2,4-cyclodiphosphate synthase (168 aa).

Residues Asp-15 and His-17 each contribute to the a divalent metal cation site. Residues 15 to 17 (DVH) and 45 to 46 (HS) contribute to the 4-CDP-2-C-methyl-D-erythritol 2-phosphate site. His-53 contacts a divalent metal cation. 4-CDP-2-C-methyl-D-erythritol 2-phosphate contacts are provided by residues 72–76 (FPNSD), Phe-150, and Arg-153.

This sequence belongs to the IspF family. As to quaternary structure, homotrimer. It depends on a divalent metal cation as a cofactor.

It carries out the reaction 4-CDP-2-C-methyl-D-erythritol 2-phosphate = 2-C-methyl-D-erythritol 2,4-cyclic diphosphate + CMP. The protein operates within isoprenoid biosynthesis; isopentenyl diphosphate biosynthesis via DXP pathway; isopentenyl diphosphate from 1-deoxy-D-xylulose 5-phosphate: step 4/6. In terms of biological role, involved in the biosynthesis of isopentenyl diphosphate (IPP) and dimethylallyl diphosphate (DMAPP), two major building blocks of isoprenoid compounds. Catalyzes the conversion of 4-diphosphocytidyl-2-C-methyl-D-erythritol 2-phosphate (CDP-ME2P) to 2-C-methyl-D-erythritol 2,4-cyclodiphosphate (ME-CPP) with a corresponding release of cytidine 5-monophosphate (CMP). This chain is 2-C-methyl-D-erythritol 2,4-cyclodiphosphate synthase, found in Anaplasma phagocytophilum (strain HZ).